The primary structure comprises 429 residues: Histidine--tRNA ligase (429 aa).

Belongs to the class-II aminoacyl-tRNA synthetase family. Homodimer.

The protein localises to the cytoplasm. It carries out the reaction tRNA(His) + L-histidine + ATP = L-histidyl-tRNA(His) + AMP + diphosphate + H(+). This is Histidine--tRNA ligase from Pseudomonas fluorescens (strain Pf0-1).